Consider the following 124-residue polypeptide: Large ribosomal subunit protein eL31 (124 aa).

It belongs to the eukaryotic ribosomal protein eL31 family.

This chain is Large ribosomal subunit protein eL31 (RpL31), found in Spodoptera frugiperda (Fall armyworm).